Here is a 467-residue protein sequence, read N- to C-terminus: Ribulose bisphosphate carboxylase large chain (467 aa).

Residues 1-2 (MS) constitute a propeptide that is removed on maturation. The residue at position 3 (Pro-3) is an N-acetylproline. An N6,N6,N6-trimethyllysine modification is found at Lys-14. Substrate-binding residues include Asn-123 and Thr-173. Catalysis depends on Lys-175, which acts as the Proton acceptor. Substrate is bound at residue Lys-177. Mg(2+) is bound by residues Lys-201, Asp-203, and Glu-204. The residue at position 201 (Lys-201) is an N6-carboxylysine. His-294 (proton acceptor) is an active-site residue. Positions 295, 327, and 379 each coordinate substrate.

The protein belongs to the RuBisCO large chain family. Type I subfamily. In terms of assembly, heterohexadecamer of 8 large chains and 8 small chains; disulfide-linked. The disulfide link is formed within the large subunit homodimers. It depends on Mg(2+) as a cofactor. Post-translationally, the disulfide bond which can form in the large chain dimeric partners within the hexadecamer appears to be associated with oxidative stress and protein turnover.

It is found in the plastid. The protein resides in the chloroplast. It carries out the reaction 2 (2R)-3-phosphoglycerate + 2 H(+) = D-ribulose 1,5-bisphosphate + CO2 + H2O. The enzyme catalyses D-ribulose 1,5-bisphosphate + O2 = 2-phosphoglycolate + (2R)-3-phosphoglycerate + 2 H(+). Its function is as follows. RuBisCO catalyzes two reactions: the carboxylation of D-ribulose 1,5-bisphosphate, the primary event in carbon dioxide fixation, as well as the oxidative fragmentation of the pentose substrate in the photorespiration process. Both reactions occur simultaneously and in competition at the same active site. The chain is Ribulose bisphosphate carboxylase large chain from Serenoa repens (Saw palmetto).